The primary structure comprises 83 residues: Bublin coiled-coil protein (83 aa).

A disordered region spans residues 1–24; the sequence is MSGPNGDLGMPVEAGAEGEEDGFG. Residues 25–74 are a coiled coil; that stretch reads EAEYAAINSMLDQINSCLDHLEEKNDHLHARLQELLESNRQTRLEFQQQL. Serine 82 carries the phosphoserine modification.

It belongs to the UPF0184 (EST00098) family.

The protein localises to the cell junction. Its subcellular location is the cytoplasm. It is found in the cytoskeleton. In terms of biological role, essential for intermediate filament organization in intestinal cells, interacts with intermediate filament and regulates intestinal lumen morphology. In Homo sapiens (Human), this protein is Bublin coiled-coil protein.